We begin with the raw amino-acid sequence, 241 residues long: Large ribosomal subunit protein uL3 (241 aa).

Disordered stretches follow at residues 139 to 164 (VSHR…KMPG) and 215 to 241 (DAPK…QEGV). An N5-methylglutamine modification is found at Gln151. The segment covering 225-241 (ANGGEEAAAPAAEQEGV) has biased composition (low complexity).

The protein belongs to the universal ribosomal protein uL3 family. Part of the 50S ribosomal subunit. Forms a cluster with proteins L14 and L19. Post-translationally, methylated by PrmB.

One of the primary rRNA binding proteins, it binds directly near the 3'-end of the 23S rRNA, where it nucleates assembly of the 50S subunit. This chain is Large ribosomal subunit protein uL3, found in Rhodopseudomonas palustris (strain HaA2).